The chain runs to 1467 residues: Helicase ARIP4 (1467 aa).

Disordered regions lie at residues 1-150 (MSDE…YAAP) and 186-234 (DSSS…GGTH). Residues 11–49 (PDLDPDVELEDAEEEEEEEEVAVEECDRDDEEDLLDDPS) are compositionally biased toward acidic residues. The span at 72–82 (TSTTSSQSEPS) shows a compositional bias: low complexity. The span at 100–115 (KKRAQKPSHMRRNIRK) shows a compositional bias: basic residues. Residues Lys115 and Lys127 each participate in a glycyl lysine isopeptide (Lys-Gly) (interchain with G-Cter in SUMO2) cross-link. Composition is skewed to basic and acidic residues over residues 133 to 147 (ELER…RKDY) and 192 to 201 (EDEKSSRDEV). Residue Lys272 forms a Glycyl lysine isopeptide (Lys-Gly) (interchain with G-Cter in SUMO2) linkage. Residues 292 to 512 (RFKTSSGFGC…WCMVDFVRPD (221 aa)) enclose the Helicase ATP-binding domain. 305–312 (HSMGLGKT) serves as a coordination point for ATP. The short motif at 463–466 (DEGH) is the DEAH box element. The LXXLL motif 1 signature appears at 551 to 555 (LHSLL). Residues 649 to 673 (GSAGTSARCPPQGTKGKGEDSTLAS) are disordered. Glycyl lysine isopeptide (Lys-Gly) (interchain with G-Cter in SUMO2) cross-links involve residues Lys665, Lys682, Lys759, Lys901, Lys1014, and Lys1018. A Helicase C-terminal domain is found at 728-896 (HLIEESVKLG…RVVDDLNPML (169 aa)). The interval 1120–1171 (RATGKPKVPEDGRMAASGSQGPSCESTSNGRHSASSPKAPDPEGLARPVSPD) is disordered. Over residues 1136–1155 (SGSQGPSCESTSNGRHSASS) the composition is skewed to polar residues. A phosphoserine mark is found at Ser1169 and Ser1172. Disordered stretches follow at residues 1184–1221 (DVAA…TALG) and 1247–1284 (PVLD…VQPY). At Thr1260 the chain carries Phosphothreonine. The short motif at 1329 to 1333 (LSNLL) is the LXXLL motif 2 element. Residues 1445–1467 (AEVGFSSNDDEDKDDDVIEVTGK) form a disordered region. The span at 1452 to 1467 (NDDEDKDDDVIEVTGK) shows a compositional bias: acidic residues.

It belongs to the SNF2/RAD54 helicase family. As to quaternary structure, interacts with AR via its N-terminus. Interacts with DYRK1A. Binds DNA and mononucleosomes, but does not seem to form large multiprotein complexes. Sumoylated.

It is found in the nucleus. The catalysed reaction is ATP + H2O = ADP + phosphate + H(+). Its activity is regulated as follows. Enzyme activity is enhanced by dsDNA (double-stranded DNA) and ssDNA (single-stranded DNA). Its function is as follows. DNA helicase that modulates androgen receptor (AR)-dependent transactivation in a promoter-dependent manner. Not able to remodel mononucleosomes in vitro. The sequence is that of Helicase ARIP4 (RAD54L2) from Homo sapiens (Human).